The chain runs to 202 residues: Nucleoside triphosphate pyrophosphatase (202 aa).

The active-site Proton acceptor is the D77.

It belongs to the Maf family. The cofactor is a divalent metal cation.

It is found in the cytoplasm. The enzyme catalyses a ribonucleoside 5'-triphosphate + H2O = a ribonucleoside 5'-phosphate + diphosphate + H(+). It catalyses the reaction a 2'-deoxyribonucleoside 5'-triphosphate + H2O = a 2'-deoxyribonucleoside 5'-phosphate + diphosphate + H(+). Nucleoside triphosphate pyrophosphatase. May have a dual role in cell division arrest and in preventing the incorporation of modified nucleotides into cellular nucleic acids. In Rickettsia canadensis (strain McKiel), this protein is Nucleoside triphosphate pyrophosphatase.